Consider the following 326-residue polypeptide: Holliday junction branch migration complex subunit RuvB (326 aa).

The tract at residues M1–Y180 is large ATPase domain (RuvB-L). ATP contacts are provided by residues I19, R20, G61, K64, T65, T66, E127–F129, R170, Y180, and R217. Mg(2+) is bound at residue T65. Positions S181–G251 are small ATPAse domain (RuvB-S). The head domain (RuvB-H) stretch occupies residues K254 to H326. Positions 307 and 312 each coordinate DNA.

Belongs to the RuvB family. In terms of assembly, homohexamer. Forms an RuvA(8)-RuvB(12)-Holliday junction (HJ) complex. HJ DNA is sandwiched between 2 RuvA tetramers; dsDNA enters through RuvA and exits via RuvB. An RuvB hexamer assembles on each DNA strand where it exits the tetramer. Each RuvB hexamer is contacted by two RuvA subunits (via domain III) on 2 adjacent RuvB subunits; this complex drives branch migration. In the full resolvosome a probable DNA-RuvA(4)-RuvB(12)-RuvC(2) complex forms which resolves the HJ.

The protein localises to the cytoplasm. It catalyses the reaction ATP + H2O = ADP + phosphate + H(+). Functionally, the RuvA-RuvB-RuvC complex processes Holliday junction (HJ) DNA during genetic recombination and DNA repair, while the RuvA-RuvB complex plays an important role in the rescue of blocked DNA replication forks via replication fork reversal (RFR). RuvA specifically binds to HJ cruciform DNA, conferring on it an open structure. The RuvB hexamer acts as an ATP-dependent pump, pulling dsDNA into and through the RuvAB complex. RuvB forms 2 homohexamers on either side of HJ DNA bound by 1 or 2 RuvA tetramers; 4 subunits per hexamer contact DNA at a time. Coordinated motions by a converter formed by DNA-disengaged RuvB subunits stimulates ATP hydrolysis and nucleotide exchange. Immobilization of the converter enables RuvB to convert the ATP-contained energy into a lever motion, pulling 2 nucleotides of DNA out of the RuvA tetramer per ATP hydrolyzed, thus driving DNA branch migration. The RuvB motors rotate together with the DNA substrate, which together with the progressing nucleotide cycle form the mechanistic basis for DNA recombination by continuous HJ branch migration. Branch migration allows RuvC to scan DNA until it finds its consensus sequence, where it cleaves and resolves cruciform DNA. In Wolbachia pipientis wMel, this protein is Holliday junction branch migration complex subunit RuvB.